Here is a 502-residue protein sequence, read N- to C-terminus: Glycerol kinase (502 aa).

Position 14 (Thr14) interacts with ADP. Residues Thr14, Thr15, and Ser16 each contribute to the ATP site. Thr14 is a sn-glycerol 3-phosphate binding site. Arg18 contacts ADP. 4 residues coordinate sn-glycerol 3-phosphate: Arg84, Glu85, Tyr136, and Asp246. Arg84, Glu85, Tyr136, Asp246, and Gln247 together coordinate glycerol. Residues Thr268 and Gly311 each coordinate ADP. The ATP site is built by Thr268, Gly311, Gln315, and Gly412. Residues Gly412 and Asn416 each contribute to the ADP site.

The protein belongs to the FGGY kinase family. As to quaternary structure, homotetramer and homodimer (in equilibrium). Heterodimer with EIIA-Glc. Binds 1 zinc ion per glycerol kinase EIIA-Glc dimer. The zinc ion is important for dimerization.

The catalysed reaction is glycerol + ATP = sn-glycerol 3-phosphate + ADP + H(+). It functions in the pathway polyol metabolism; glycerol degradation via glycerol kinase pathway; sn-glycerol 3-phosphate from glycerol: step 1/1. Activity of this regulatory enzyme is affected by several metabolites. Allosterically and non-competitively inhibited by fructose 1,6-bisphosphate (FBP) and unphosphorylated phosphocarrier protein EIIA-Glc (III-Glc), an integral component of the bacterial phosphotransferase (PTS) system. Key enzyme in the regulation of glycerol uptake and metabolism. Catalyzes the phosphorylation of glycerol to yield sn-glycerol 3-phosphate. The polypeptide is Glycerol kinase (Shigella boydii serotype 18 (strain CDC 3083-94 / BS512)).